The chain runs to 171 residues: Small ribosomal subunit protein uS5 (171 aa).

The S5 DRBM domain maps to 15-78; sequence YEEKVVKIKR…EKAKKQLIRI (64 aa).

This sequence belongs to the universal ribosomal protein uS5 family. Part of the 30S ribosomal subunit. Contacts proteins S4 and S8.

Functionally, with S4 and S12 plays an important role in translational accuracy. Its function is as follows. Located at the back of the 30S subunit body where it stabilizes the conformation of the head with respect to the body. This Phytoplasma australiense protein is Small ribosomal subunit protein uS5.